The following is a 181-amino-acid chain: Mitochondrial inner membrane protein Mpv17 (181 aa).

The next 4 helical transmembrane spans lie at 20–38, 48–70, 91–113, and 140–162; these read VIVSGAVCGAGDAFTQYLT, TARFTCLAAVFIAPPLNVWFRVL, FMFSPFFNAIILVNLRLLEGFSF, and LINFYFVPLNYRVILIQVVAFFW.

It belongs to the peroxisomal membrane protein PXMP2/4 family.

It is found in the mitochondrion inner membrane. In terms of biological role, involved in mitochondria homeostasis. This is Mitochondrial inner membrane protein Mpv17 from Caenorhabditis briggsae.